Reading from the N-terminus, the 464-residue chain is NADH-ubiquinone oxidoreductase chain 4 (464 aa).

Transmembrane regions (helical) follow at residues 18–38, 54–74, 79–99, 102–122, 131–151, 168–188, 207–227, 239–259, 266–286, 297–317, 332–352, 375–395, and 420–440; these read LLPT…VLPT, IADI…IANW, SLLY…NFMC, MLSF…LIGL, AADY…LAIG, VVLS…GIMV, PLAG…YAII, VLYT…TSII, LKVI…LGIL, LILS…VGGI, GLLT…FSNI, TILG…MLKV, and LLMI…NGII.

Belongs to the complex I subunit 4 family.

Its subcellular location is the mitochondrion membrane. The catalysed reaction is a ubiquinone + NADH + 5 H(+)(in) = a ubiquinol + NAD(+) + 4 H(+)(out). Its function is as follows. Core subunit of the mitochondrial membrane respiratory chain NADH dehydrogenase (Complex I) that is believed to belong to the minimal assembly required for catalysis. Complex I functions in the transfer of electrons from NADH to the respiratory chain. The immediate electron acceptor for the enzyme is believed to be ubiquinone. This chain is NADH-ubiquinone oxidoreductase chain 4 (NAD4), found in Candida albicans (strain SC5314 / ATCC MYA-2876) (Yeast).